Here is a 398-residue protein sequence, read N- to C-terminus: Formate-dependent phosphoribosylglycinamide formyltransferase (398 aa).

Residues 21–22 (EL) and Glu-81 each bind N(1)-(5-phospho-beta-D-ribosyl)glycinamide. Residues Arg-113, Lys-154, 194–197 (EEYV), and Glu-202 each bind ATP. Residues 118–314 (RFAAEKVKVP…EFQVHVRSAL (197 aa)) form the ATP-grasp domain. Mg(2+) is bound by residues Glu-273 and Glu-285. Residues Asp-292, Lys-362, and 369 to 370 (RR) contribute to the N(1)-(5-phospho-beta-D-ribosyl)glycinamide site.

It belongs to the PurK/PurT family. Homodimer.

It catalyses the reaction N(1)-(5-phospho-beta-D-ribosyl)glycinamide + formate + ATP = N(2)-formyl-N(1)-(5-phospho-beta-D-ribosyl)glycinamide + ADP + phosphate + H(+). It functions in the pathway purine metabolism; IMP biosynthesis via de novo pathway; N(2)-formyl-N(1)-(5-phospho-D-ribosyl)glycinamide from N(1)-(5-phospho-D-ribosyl)glycinamide (formate route): step 1/1. Involved in the de novo purine biosynthesis. Catalyzes the transfer of formate to 5-phospho-ribosyl-glycinamide (GAR), producing 5-phospho-ribosyl-N-formylglycinamide (FGAR). Formate is provided by PurU via hydrolysis of 10-formyl-tetrahydrofolate. This is Formate-dependent phosphoribosylglycinamide formyltransferase from Sulfolobus acidocaldarius (strain ATCC 33909 / DSM 639 / JCM 8929 / NBRC 15157 / NCIMB 11770).